The following is a 374-amino-acid chain: MKQENIISTTEDLKKIVNKALKLDAVGLDTEFVWERTYYPQLGLIQIALSDEECYAIDPLSIKDLSPLGELLADRNTIKILHDAPQDLIIMSQATGATPQNIFDTRLAAGFAGSISTISLLQLVSEQLETELDKSETRTNWLKRPLTEKQLSYSLNDVRYLRATRVILLSKIIGPKIKSWLQEELNLLNNPANYSTIADESRYKKVKGVNKLDRKSIGVAQEIATWREQKARELNRPRGHVIKDDILLEIAAIRPTRPEELANTAISTKAAERYGNDICQATARALNKKEVDLPHQQKRSQLSSQEKGALAQLKELITLKCDILGIDPALLGNSNELKKIIQTLYKGKTTHMRQSFGWRKEFLKDFYQIHRDTI.

Positions 6-171 constitute a 3'-5' exonuclease domain; sequence IISTTEDLKK…RATRVILLSK (166 aa). Positions 213–292 constitute an HRDC domain; it reads DRKSIGVAQE…ARALNKKEVD (80 aa).

Belongs to the RNase D family. Requires a divalent metal cation as cofactor.

It localises to the cytoplasm. It catalyses the reaction Exonucleolytic cleavage that removes extra residues from the 3'-terminus of tRNA to produce 5'-mononucleotides.. Exonuclease involved in the 3' processing of various precursor tRNAs. Initiates hydrolysis at the 3'-terminus of an RNA molecule and releases 5'-mononucleotides. The protein is Ribonuclease D of Desulfotalea psychrophila (strain LSv54 / DSM 12343).